The primary structure comprises 266 residues: Putative pyruvate, phosphate dikinase regulatory protein (266 aa).

149 to 156 (GVSRTSKT) serves as a coordination point for ADP.

The protein belongs to the pyruvate, phosphate/water dikinase regulatory protein family. PDRP subfamily.

It catalyses the reaction N(tele)-phospho-L-histidyl/L-threonyl-[pyruvate, phosphate dikinase] + ADP = N(tele)-phospho-L-histidyl/O-phospho-L-threonyl-[pyruvate, phosphate dikinase] + AMP + H(+). The catalysed reaction is N(tele)-phospho-L-histidyl/O-phospho-L-threonyl-[pyruvate, phosphate dikinase] + phosphate + H(+) = N(tele)-phospho-L-histidyl/L-threonyl-[pyruvate, phosphate dikinase] + diphosphate. In terms of biological role, bifunctional serine/threonine kinase and phosphorylase involved in the regulation of the pyruvate, phosphate dikinase (PPDK) by catalyzing its phosphorylation/dephosphorylation. The polypeptide is Putative pyruvate, phosphate dikinase regulatory protein (Geobacillus thermodenitrificans (strain NG80-2)).